A 306-amino-acid chain; its full sequence is MPALLKINKKKNGQTKIDRLFSKRRKTSLAIEKNHSKASMCTGQSPLNIISYNVPPLIVLRNKTIRNSIEVLVEEMFRDIQMRQQTNVLVAQCPRMIVETQLIGLFQSNYTSVAEELEQSIRTGDIRRLYLNRSDKFCGESCLILRPEFDKLFTYYLCKFKDQEHIYTLIFKLHKLLIENPLPSYTSEELKFNWEERRLLISMGFLILAGTDSYGISLPNLGIFTHILRNSRNDLSNYLKKRPYREVIESSLYNRNVSVACKKKNEAFFGWKFRLCDAIGAGLVDSFMTTCGRAFRLTKKGLEMKF.

Belongs to the STK19 family.

The catalysed reaction is L-seryl-[protein] + ATP = O-phospho-L-seryl-[protein] + ADP + H(+). It catalyses the reaction L-threonyl-[protein] + ATP = O-phospho-L-threonyl-[protein] + ADP + H(+). Its function is as follows. Serine/threonine-protein kinase. Has a role in meiosis. The sequence is that of Serine/threonine-protein kinase mug51 (mug51) from Schizosaccharomyces pombe (strain 972 / ATCC 24843) (Fission yeast).